The primary structure comprises 178 residues: Large ribosomal subunit protein uL6 (178 aa).

Belongs to the universal ribosomal protein uL6 family. In terms of assembly, part of the 50S ribosomal subunit.

This protein binds to the 23S rRNA, and is important in its secondary structure. It is located near the subunit interface in the base of the L7/L12 stalk, and near the tRNA binding site of the peptidyltransferase center. In Lactococcus lactis subsp. cremoris (strain MG1363), this protein is Large ribosomal subunit protein uL6.